The following is a 588-amino-acid chain: MFS siderochrome iron transporter 1 (588 aa).

A run of 13 helical transmembrane segments spans residues 60–80, 104–124, 133–153, 161–181, 191–211, 225–245, 278–298, 307–327, 348–368, 385–405, 413–433, 440–460, and 473–495; these read QVWS…ITFV, LTAS…LPLA, PQGF…MAAC, AAQV…SIFI, ALMF…GGPL, YGAF…VFAW, IIGI…FSLY, SSLV…FALY, LGAC…DSYF, YIVN…GILV, WLAL…MITF, IGYI…CVIT, and YVAV…GQTV. An N-linked (GlcNAc...) asparagine glycan is attached at asparagine 519. A helical transmembrane segment spans residues 552–572; the sequence is KYMLIGGTAILAVGLGATMMW.

Belongs to the major facilitator superfamily.

It is found in the membrane. In terms of biological role, major facilitator transporter involved in siderophore transport. This is MFS siderochrome iron transporter 1 from Ajellomyces capsulatus (Darling's disease fungus).